The following is a 214-amino-acid chain: N-(5'-phosphoribosyl)anthranilate isomerase (214 aa).

Belongs to the TrpF family.

It catalyses the reaction N-(5-phospho-beta-D-ribosyl)anthranilate = 1-(2-carboxyphenylamino)-1-deoxy-D-ribulose 5-phosphate. It functions in the pathway amino-acid biosynthesis; L-tryptophan biosynthesis; L-tryptophan from chorismate: step 3/5. The sequence is that of N-(5'-phosphoribosyl)anthranilate isomerase from Rhodospirillum centenum (strain ATCC 51521 / SW).